The following is a 324-amino-acid chain: Acetyl-coenzyme A carboxylase carboxyl transferase subunit alpha (324 aa).

Positions 37–291 (KLDKRLDRLK…QEYVLQEWVK (255 aa)) constitute a CoA carboxyltransferase C-terminal domain.

The protein belongs to the AccA family. As to quaternary structure, acetyl-CoA carboxylase is a heterohexamer composed of biotin carboxyl carrier protein (AccB), biotin carboxylase (AccC) and two subunits each of ACCase subunit alpha (AccA) and ACCase subunit beta (AccD).

It is found in the cytoplasm. It carries out the reaction N(6)-carboxybiotinyl-L-lysyl-[protein] + acetyl-CoA = N(6)-biotinyl-L-lysyl-[protein] + malonyl-CoA. It participates in lipid metabolism; malonyl-CoA biosynthesis; malonyl-CoA from acetyl-CoA: step 1/1. In terms of biological role, component of the acetyl coenzyme A carboxylase (ACC) complex. First, biotin carboxylase catalyzes the carboxylation of biotin on its carrier protein (BCCP) and then the CO(2) group is transferred by the carboxyltransferase to acetyl-CoA to form malonyl-CoA. This is Acetyl-coenzyme A carboxylase carboxyl transferase subunit alpha from Chlamydia trachomatis serovar L2 (strain ATCC VR-902B / DSM 19102 / 434/Bu).